The following is a 168-amino-acid chain: Large ribosomal subunit protein uL10 (168 aa).

The protein belongs to the universal ribosomal protein uL10 family. In terms of assembly, part of the ribosomal stalk of the 50S ribosomal subunit. The N-terminus interacts with L11 and the large rRNA to form the base of the stalk. The C-terminus forms an elongated spine to which L12 dimers bind in a sequential fashion forming a multimeric L10(L12)X complex.

Functionally, forms part of the ribosomal stalk, playing a central role in the interaction of the ribosome with GTP-bound translation factors. This chain is Large ribosomal subunit protein uL10, found in Clostridioides difficile (strain 630) (Peptoclostridium difficile).